Consider the following 63-residue polypeptide: MAVQQNKKSRSRRDMRRSHDALTKPTLSVDPTTGETHLRHHMTPDGYYRGKKIIDAETAYEQE.

The tract at residues 1–45 (MAVQQNKKSRSRRDMRRSHDALTKPTLSVDPTTGETHLRHHMTPD) is disordered. The segment covering 7–16 (KKSRSRRDMR) has biased composition (basic residues). The span at 25–35 (PTLSVDPTTGE) shows a compositional bias: polar residues.

It belongs to the bacterial ribosomal protein bL32 family.

This chain is Large ribosomal subunit protein bL32, found in Legionella pneumophila (strain Paris).